Reading from the N-terminus, the 145-residue chain is D-aminoacyl-tRNA deacylase (145 aa).

The short motif at glycine 137–proline 138 is the Gly-cisPro motif, important for rejection of L-amino acids element.

This sequence belongs to the DTD family. Homodimer.

The protein localises to the cytoplasm. The catalysed reaction is glycyl-tRNA(Ala) + H2O = tRNA(Ala) + glycine + H(+). It carries out the reaction a D-aminoacyl-tRNA + H2O = a tRNA + a D-alpha-amino acid + H(+). In terms of biological role, an aminoacyl-tRNA editing enzyme that deacylates mischarged D-aminoacyl-tRNAs. Also deacylates mischarged glycyl-tRNA(Ala), protecting cells against glycine mischarging by AlaRS. Acts via tRNA-based rather than protein-based catalysis; rejects L-amino acids rather than detecting D-amino acids in the active site. By recycling D-aminoacyl-tRNA to D-amino acids and free tRNA molecules, this enzyme counteracts the toxicity associated with the formation of D-aminoacyl-tRNA entities in vivo and helps enforce protein L-homochirality. This is D-aminoacyl-tRNA deacylase from Salmonella agona (strain SL483).